A 341-amino-acid chain; its full sequence is Methionine import ATP-binding protein MetN 2 (341 aa).

One can recognise an ABC transporter domain in the interval 2-241 (IELKEVVKEY…PQHTVTKRFV (240 aa)). 38 to 45 (GFSGAGKS) provides a ligand contact to ATP.

It belongs to the ABC transporter superfamily. Methionine importer (TC 3.A.1.24) family. The complex is composed of two ATP-binding proteins (MetN), two transmembrane proteins (MetI) and a solute-binding protein (MetQ).

It localises to the cell membrane. It carries out the reaction L-methionine(out) + ATP + H2O = L-methionine(in) + ADP + phosphate + H(+). It catalyses the reaction D-methionine(out) + ATP + H2O = D-methionine(in) + ADP + phosphate + H(+). Its function is as follows. Part of the ABC transporter complex MetNIQ involved in methionine import. Responsible for energy coupling to the transport system. This is Methionine import ATP-binding protein MetN 2 from Staphylococcus aureus (strain N315).